The chain runs to 324 residues: tRNA dimethylallyltransferase (324 aa).

17–24 (GPTASGKT) contacts ATP. Residue 19–24 (TASGKT) participates in substrate binding. 4 interaction with substrate tRNA regions span residues 42-45 (DSAL), 166-170 (QRIQR), 251-256 (RCVGYR), and 284-291 (KRQITWLR).

The protein belongs to the IPP transferase family. Monomer. Mg(2+) is required as a cofactor.

The catalysed reaction is adenosine(37) in tRNA + dimethylallyl diphosphate = N(6)-dimethylallyladenosine(37) in tRNA + diphosphate. Catalyzes the transfer of a dimethylallyl group onto the adenine at position 37 in tRNAs that read codons beginning with uridine, leading to the formation of N6-(dimethylallyl)adenosine (i(6)A). The sequence is that of tRNA dimethylallyltransferase from Burkholderia orbicola (strain MC0-3).